We begin with the raw amino-acid sequence, 456 residues long: tRNA-2-methylthio-N(6)-dimethylallyladenosine synthase (456 aa).

The 118-residue stretch at 6–123 (KHVYIETYGC…LPNLIEEAQR (118 aa)) folds into the MTTase N-terminal domain. C15, C52, C86, C160, C164, and C167 together coordinate [4Fe-4S] cluster. Residues 146 to 380 (RAEGPTAYVS…RILEMAASIS (235 aa)) form the Radical SAM core domain. Residues 381 to 444 (EAMVGTEQWV…KNSLRGRLIE (64 aa)) form the TRAM domain.

The protein belongs to the methylthiotransferase family. MiaB subfamily. In terms of assembly, monomer. The cofactor is [4Fe-4S] cluster.

It is found in the cytoplasm. It carries out the reaction N(6)-dimethylallyladenosine(37) in tRNA + (sulfur carrier)-SH + AH2 + 2 S-adenosyl-L-methionine = 2-methylsulfanyl-N(6)-dimethylallyladenosine(37) in tRNA + (sulfur carrier)-H + 5'-deoxyadenosine + L-methionine + A + S-adenosyl-L-homocysteine + 2 H(+). Its function is as follows. Catalyzes the methylthiolation of N6-(dimethylallyl)adenosine (i(6)A), leading to the formation of 2-methylthio-N6-(dimethylallyl)adenosine (ms(2)i(6)A) at position 37 in tRNAs that read codons beginning with uridine. The polypeptide is tRNA-2-methylthio-N(6)-dimethylallyladenosine synthase (Dichelobacter nodosus (strain VCS1703A)).